A 380-amino-acid polypeptide reads, in one-letter code: Heme A synthase (380 aa).

Transmembrane regions (helical) follow at residues 36–56 (IRAWLAVLFALVVAMIVVGGL), 125–145 (VIGLVWALGFFGFLLARKIPA), 151–171 (LILPGVLGGVQGAVGAWMVAS), 187–207 (LATHLGLAFVILGLLAWSILQ), 227–247 (FGLATGWLHLAFLQILIGALV), 287–307 (LVQFIHRIVGYLLLAYGVMVW), 320–340 (FAFNAGFAALSLQVVLGIVTV), and 344–364 (APWQIAILHQLLAVGVFVLIL). His-292 is a heme binding site. His-352 serves as a coordination point for heme.

This sequence belongs to the COX15/CtaA family. Type 2 subfamily. Interacts with CtaB. Heme b is required as a cofactor.

It is found in the cell membrane. It catalyses the reaction Fe(II)-heme o + 2 A + H2O = Fe(II)-heme a + 2 AH2. It functions in the pathway porphyrin-containing compound metabolism; heme A biosynthesis; heme A from heme O: step 1/1. Its function is as follows. Catalyzes the conversion of heme O to heme A by two successive hydroxylations of the methyl group at C8. The first hydroxylation forms heme I, the second hydroxylation results in an unstable dihydroxymethyl group, which spontaneously dehydrates, resulting in the formyl group of heme A. The polypeptide is Heme A synthase (Ruegeria pomeroyi (strain ATCC 700808 / DSM 15171 / DSS-3) (Silicibacter pomeroyi)).